The following is a 102-amino-acid chain: Large ribosomal subunit protein bL21 (102 aa).

Belongs to the bacterial ribosomal protein bL21 family. In terms of assembly, part of the 50S ribosomal subunit. Contacts protein L20.

Its function is as follows. This protein binds to 23S rRNA in the presence of protein L20. This is Large ribosomal subunit protein bL21 from Bifidobacterium longum subsp. infantis (strain ATCC 15697 / DSM 20088 / JCM 1222 / NCTC 11817 / S12).